The sequence spans 170 residues: Translationally-controlled tumor protein homolog (170 aa).

The region spanning 1-170 is the TCTP domain; sequence MIIYKDLLSG…FKDGLEIEKC (170 aa).

The protein belongs to the TCTP family.

It localises to the cytoplasm. Functionally, involved in calcium binding and microtubule stabilization. The sequence is that of Translationally-controlled tumor protein homolog (tpt1) from Scophthalmus maximus (Turbot).